Consider the following 841-residue polypeptide: Probable alpha-glucuronidase A (841 aa).

A signal peptide spans 1-20 (MRGLNLFQLILALLLSMVAA). Asparagine 51, asparagine 76, asparagine 85, asparagine 149, asparagine 222, asparagine 279, asparagine 310, asparagine 343, asparagine 450, asparagine 465, asparagine 527, asparagine 576, asparagine 682, asparagine 723, and asparagine 732 each carry an N-linked (GlcNAc...) asparagine glycan.

It belongs to the glycosyl hydrolase 67 family.

Its subcellular location is the secreted. It carries out the reaction an alpha-D-glucuronoside + H2O = D-glucuronate + an alcohol. Alpha-glucuronidase involved in the hydrolysis of xylan, a major structural heterogeneous polysaccharide found in plant biomass representing the second most abundant polysaccharide in the biosphere, after cellulose. Releases 4-O-methylglucuronic acid from xylan. The sequence is that of Probable alpha-glucuronidase A (aguA) from Aspergillus niger (strain ATCC MYA-4892 / CBS 513.88 / FGSC A1513).